We begin with the raw amino-acid sequence, 328 residues long: MAKDIRVLLYYLYTPIENAEQFAADHLAFCKSIGLKGRILVADEGINGTVSGDYETTQKYMDYVHSLPGMEDLWFKIDEESEQAFKKMFVRYKKEIVHLGLEDNDFDNDINPLETTGAYLSPKEFKEALLDKDTVVLDTRNDYEYDLGHFRGAIRPDIRNFRELPQWVRDNKEKFMDKRVVVYCTGGVRCEKFSGWMVREGYKDVGQLHGGIATYGKDPEVQGELWDGKMYVFDERIAVDVNHVNPTIVGKDWFDGTPCERYVNCGNPFCNRRILTSEENEDKYLRGCSHECRVHPRNRYVSKNELTQAEVIERLAAIGESLDQAATV.

Residues 130-224 enclose the Rhodanese domain; that stretch reads LDKDTVVLDT…YGKDPEVQGE (95 aa). The Cysteine persulfide intermediate role is filled by cysteine 184.

The protein belongs to the TrhO family.

It carries out the reaction uridine(34) in tRNA + AH2 + O2 = 5-hydroxyuridine(34) in tRNA + A + H2O. In terms of biological role, catalyzes oxygen-dependent 5-hydroxyuridine (ho5U) modification at position 34 in tRNAs. The protein is tRNA uridine(34) hydroxylase of Streptococcus pneumoniae (strain Taiwan19F-14).